A 74-amino-acid chain; its full sequence is MSLVVQCPICQSSVPWTDDAKFKPFCSERCKLIDLGDWASEKHVIPVKSPFEAGLLDPDLLDDAGFEQDDFFKE.

Residues cysteine 7, cysteine 10, cysteine 26, and cysteine 30 each coordinate Zn(2+).

Belongs to the DNA gyrase inhibitor YacG family. Interacts with GyrB. Requires Zn(2+) as cofactor.

Its function is as follows. Inhibits all the catalytic activities of DNA gyrase by preventing its interaction with DNA. Acts by binding directly to the C-terminal domain of GyrB, which probably disrupts DNA binding by the gyrase. The chain is DNA gyrase inhibitor YacG from Shewanella denitrificans (strain OS217 / ATCC BAA-1090 / DSM 15013).